A 358-amino-acid polypeptide reads, in one-letter code: MNKSMTAKLTQLSVRLEELNRLLSSESITVNLDQYRKLTRERAEIAPVVDLYNAYLQSEQDIHTAQEMAAEAEMREFADAEIRDAKERLVRYGAELQKQLLPKDPNDERNIFLEIRAGTGGDESALFAADLFRMYARFAERQRWQVEIISQSPSDVGGYKEIIAKISGEGAYSKLKFESGGHRVQRVPATETQGRIHTSACTVAVMPEADEIEDVALNPAELRIDTFRASGAGGQHINKTDSAVRITHLPTGIVVECQDGRSQHKNKAQAMSVLAARIRDKQMQEQQSKQAATRKSLVGTGNRSGRIRTYNFPQGRITDHRINLTLYKIEQIMDGDLNELCSALLAEHQAEQLAAMAE.

Q235 carries the N5-methylglutamine modification.

It belongs to the prokaryotic/mitochondrial release factor family. Post-translationally, methylated by PrmC. Methylation increases the termination efficiency of RF1.

The protein localises to the cytoplasm. Functionally, peptide chain release factor 1 directs the termination of translation in response to the peptide chain termination codons UAG and UAA. This is Peptide chain release factor 1 from Nitrosospira multiformis (strain ATCC 25196 / NCIMB 11849 / C 71).